A 391-amino-acid polypeptide reads, in one-letter code: MERVRGASSSDSVATLHGDHNYHCMATFKLDCTSARTRGVVSILEHRDPATVDDIFMQRVCHDINDVLRPVECLTSFPEYRRTLRVAVEAATELHGVSALSGQLTKFLEDHDGAMLPLAWPPNRYLRLTSGRKLGYLDVAEKLRKEYPMCNGPLEVLGVILGPGQSLYSDQHPVLLMGLTGTIFLHARGRPVWSPDYDPERDADRLFLAAESLQSFGREGLCRCDNVYTEDGGAPYATPEDPVLKNIVFTPHLGGKALHQQICKIKGHTWYLNGCPGMLKDRVFVATPDIPPFVRHVNLELFGHRFLPIGRVTRSPEDPECEMFIMVDAGGAIYGHMLDSGKVRRLADNFDQFMRMGTRRVISISRWLREVVSTPSTRRPRLGPRTTGSFS.

The protein belongs to the herpesviridae US22 family.

It is found in the host cytoplasm. The protein resides in the host nucleus. Its function is as follows. Involved in the reactivation of latent MCMV in spleen cells. This chain is Immediate-early protein 2 (IE2), found in Murid herpesvirus 1 (strain Smith) (MuHV-1).